The following is a 1213-amino-acid chain: Hybrid signal transduction histidine kinase K (1213 aa).

4 disordered regions span residues 1–37 (MIELNNHSKINKNENNTNTRNNSSNNNNNNNNINKTN), 98–189 (NNNY…SSSS), 279–392 (NKNV…IPFR), and 495–565 (TTEQ…NYNN). 6 stretches are compositionally biased toward low complexity: residues 98–162 (NNNY…QKDQ), 171–189 (SLSSSSSSSSLSSSSSSSS), 279–331 (NKNV…NSGA), 339–371 (NNNNNNNNNNNNNNNNNNNSNSNSNNNSKSNNN), 498–511 (QQQQLQQQQQQQQQ), and 522–565 (QRQQ…NYNN). 6 helical membrane-spanning segments follow: residues 600-618 (IIFNSFNFICSIVLDGSNI), 628-648 (LIIGFCFTILSFIPSWIIFFW), 652-672 (INKPAVMAIIAMPMSISSLVI), 676-696 (TGSIHYPCHILCFTLCFALTI), 729-749 (IQWSLMVLSIYLLFFVANLYG), and 768-788 (IIDVTIIIMTLIFTLCYQYFI). The 231-residue stretch at 822 to 1052 (TMSHEIRTPL…TFWFILPLEE (231 aa)) folds into the Histidine kinase domain. His-825 is subject to Phosphohistidine; by autocatalysis. Residues 1076–1199 (KVLIAEDNII…QLRSAIEMAI (124 aa)) enclose the Response regulatory domain. Position 1125 is a 4-aspartylphosphate (Asp-1125).

In terms of processing, activation probably requires transfer of a phosphate group between a histidine in the kinase core (transmitter) domain and an aspartate of the receiver domain.

It is found in the nucleus membrane. The enzyme catalyses ATP + protein L-histidine = ADP + protein N-phospho-L-histidine.. Functionally, involved in a signal transduction pathway that regulates morphogenesis and controls entry into the culmination stage. May act via the regA pathway, being activated by a morphogenesis-stimulated ligand, reducing phosphodiesterase regA levels and allowing cAMP level to rise to promote the culmination stage. This protein probably undergoes an ATP-dependent autophosphorylation at a conserved histidine residue in the kinase core, and a phosphoryl group is then transferred to a conserved aspartate residue in the receiver domain. This Dictyostelium discoideum (Social amoeba) protein is Hybrid signal transduction histidine kinase K (dhkK).